The chain runs to 24 residues: Ranatuerin-4 (24 aa).

Residues C18 and C24 are joined by a disulfide bond.

The protein belongs to the frog skin active peptide (FSAP) family. Ranatuerin subfamily. As to expression, expressed by the skin glands.

The protein localises to the secreted. Its function is as follows. Antibacterial activity against Gram-positive bacterium S.aureus (MIC=55 uM). Shows no detectable hemolytic activity towards human erythrocytes. This Aquarana catesbeiana (American bullfrog) protein is Ranatuerin-4.